The following is a 404-amino-acid chain: MTEETISQAVPPVRDWPAVDLPGSDFDPVLTELMREGPVTRISLPNGEGWAWLVTRHDDVRLVTNDPRFGREAVMDRQVTRLAPHFIPARGAVGFLDPPDHTRLRRSVAAAFTARGVERVRERSRGMLDELVDAMLRAGPPADLTEAVLSPFPIAVICELMGVPATDRHSMHTWTQLILSSSHGAEVSERAKNEMNAYFSDLIGLRSDSAGEDVTSLLGAAVGRDEITLSEAVGLAVLLQIGGEAVTNNSGQMFHLLLSRPELAERLRSEPEIRPRAIDELLRWIPHRNAVGLSRIALEDVEIKGVRIRAGDAVYVSYLAANRDPEVFPDPDRIDFERSPNPHVSFGFGPHYCPGGMLARLESELLVDAVLDRVPGLKLAVAPEDVPFKKGALIRGPEALPVTW.

R288 and L293 together coordinate flaviolin. C353 is a binding site for heme.

The protein belongs to the cytochrome P450 family. Heme serves as cofactor.

The catalysed reaction is 2 flaviolin + 2 reduced [2Fe-2S]-[ferredoxin] + O2 + H(+) = 3,3'-biflaviolin + 2 oxidized [2Fe-2S]-[ferredoxin] + 2 H2O. The enzyme catalyses 2 flaviolin + 2 reduced [2Fe-2S]-[ferredoxin] + O2 + H(+) = 3,8'-biflaviolin + 2 oxidized [2Fe-2S]-[ferredoxin] + 2 H2O. It functions in the pathway pigment biosynthesis. Catalyzes oxidative C-C coupling reaction to polymerize flaviolin and form highly conjugated pigments which protect the soil bacterium from deleterious effects of UV irradiation (three isomers of biflaviolin and one triflaviolin). The protein is Biflaviolin synthase CYP158A2 of Streptomyces coelicolor (strain ATCC BAA-471 / A3(2) / M145).